Consider the following 252-residue polypeptide: Small ribosomal subunit protein eS4 (252 aa).

Positions 43-105 (FPLLIIVRDI…TGETYRVIPV (63 aa)) constitute an S4 RNA-binding domain.

It belongs to the eukaryotic ribosomal protein eS4 family.

The chain is Small ribosomal subunit protein eS4 from Staphylothermus marinus (strain ATCC 43588 / DSM 3639 / JCM 9404 / F1).